The sequence spans 53 residues: TSTTLVKCACEPCLCNVDPSKAIDRNGLYYCCEACADGHTGGSKGCGHTGCNC.

The protein belongs to the metallothionein superfamily. Type 14 family.

This protein complexes cadmium, zinc and copper. The polypeptide is Metallothionein (Synechococcus sp).